A 449-amino-acid polypeptide reads, in one-letter code: tRNA (guanine(37)-N(1))-methyltransferase (449 aa).

S-adenosyl-L-methionine is bound by residues H216, 254–255, 282–283, and N345; these read DL and DG.

Belongs to the class I-like SAM-binding methyltransferase superfamily. TRM5/TYW2 family. In terms of assembly, monomer.

It localises to the mitochondrion matrix. The protein localises to the nucleus. It is found in the cytoplasm. It carries out the reaction guanosine(37) in tRNA + S-adenosyl-L-methionine = N(1)-methylguanosine(37) in tRNA + S-adenosyl-L-homocysteine + H(+). In terms of biological role, specifically methylates the N1 position of guanosine-37 in various cytoplasmic and mitochondrial tRNAs. Methylation is not dependent on the nature of the nucleoside 5' of the target nucleoside. This is the first step in the biosynthesis of wybutosine (yW), a modified base adjacent to the anticodon of tRNAs and required for accurate decoding. This chain is tRNA (guanine(37)-N(1))-methyltransferase, found in Candida albicans (strain WO-1) (Yeast).